The following is a 230-amino-acid chain: Phosphatidylserine decarboxylase proenzyme (230 aa).

S186 serves as the catalytic Schiff-base intermediate with substrate; via pyruvic acid. A Pyruvic acid (Ser); by autocatalysis modification is found at S186.

This sequence belongs to the phosphatidylserine decarboxylase family. PSD-A subfamily. Heterodimer of a large membrane-associated beta subunit and a small pyruvoyl-containing alpha subunit. Pyruvate is required as a cofactor. Post-translationally, is synthesized initially as an inactive proenzyme. Formation of the active enzyme involves a self-maturation process in which the active site pyruvoyl group is generated from an internal serine residue via an autocatalytic post-translational modification. Two non-identical subunits are generated from the proenzyme in this reaction, and the pyruvate is formed at the N-terminus of the alpha chain, which is derived from the carboxyl end of the proenzyme. The post-translation cleavage follows an unusual pathway, termed non-hydrolytic serinolysis, in which the side chain hydroxyl group of the serine supplies its oxygen atom to form the C-terminus of the beta chain, while the remainder of the serine residue undergoes an oxidative deamination to produce ammonia and the pyruvoyl prosthetic group on the alpha chain.

Its subcellular location is the cell membrane. It carries out the reaction a 1,2-diacyl-sn-glycero-3-phospho-L-serine + H(+) = a 1,2-diacyl-sn-glycero-3-phosphoethanolamine + CO2. It participates in phospholipid metabolism; phosphatidylethanolamine biosynthesis; phosphatidylethanolamine from CDP-diacylglycerol: step 2/2. In terms of biological role, catalyzes the formation of phosphatidylethanolamine (PtdEtn) from phosphatidylserine (PtdSer). The chain is Phosphatidylserine decarboxylase proenzyme from Wolbachia sp. subsp. Brugia malayi (strain TRS).